Consider the following 123-residue polypeptide: Small ribosomal subunit protein uS12 (123 aa).

Residue aspartate 89 is modified to 3-methylthioaspartic acid.

This sequence belongs to the universal ribosomal protein uS12 family. As to quaternary structure, part of the 30S ribosomal subunit. Contacts proteins S8 and S17. May interact with IF1 in the 30S initiation complex.

In terms of biological role, with S4 and S5 plays an important role in translational accuracy. Functionally, interacts with and stabilizes bases of the 16S rRNA that are involved in tRNA selection in the A site and with the mRNA backbone. Located at the interface of the 30S and 50S subunits, it traverses the body of the 30S subunit contacting proteins on the other side and probably holding the rRNA structure together. The combined cluster of proteins S8, S12 and S17 appears to hold together the shoulder and platform of the 30S subunit. The sequence is that of Small ribosomal subunit protein uS12 from Acidiphilium cryptum (strain JF-5).